The following is a 307-amino-acid chain: Acetaldehyde dehydrogenase 2 (307 aa).

C131 functions as the Acyl-thioester intermediate in the catalytic mechanism. Residues 162-170 (SVGPGTRKN) and N273 each bind NAD(+).

It belongs to the acetaldehyde dehydrogenase family.

The enzyme catalyses acetaldehyde + NAD(+) + CoA = acetyl-CoA + NADH + H(+). The sequence is that of Acetaldehyde dehydrogenase 2 (aphF) from Comamonas testosteroni (Pseudomonas testosteroni).